The chain runs to 256 residues: Thiazole synthase (256 aa).

Lys-96 acts as the Schiff-base intermediate with DXP in catalysis. Residues Gly-157, 183-184 (AG), and 205-206 (NT) contribute to the 1-deoxy-D-xylulose 5-phosphate site.

This sequence belongs to the ThiG family. As to quaternary structure, homotetramer. Forms heterodimers with either ThiH or ThiS.

It localises to the cytoplasm. It carries out the reaction [ThiS sulfur-carrier protein]-C-terminal-Gly-aminoethanethioate + 2-iminoacetate + 1-deoxy-D-xylulose 5-phosphate = [ThiS sulfur-carrier protein]-C-terminal Gly-Gly + 2-[(2R,5Z)-2-carboxy-4-methylthiazol-5(2H)-ylidene]ethyl phosphate + 2 H2O + H(+). It participates in cofactor biosynthesis; thiamine diphosphate biosynthesis. Catalyzes the rearrangement of 1-deoxy-D-xylulose 5-phosphate (DXP) to produce the thiazole phosphate moiety of thiamine. Sulfur is provided by the thiocarboxylate moiety of the carrier protein ThiS. In vitro, sulfur can be provided by H(2)S. The polypeptide is Thiazole synthase (Bacillus cereus (strain AH187)).